A 525-amino-acid chain; its full sequence is Zwittermicin A synthase ZmaJ (525 aa).

This sequence belongs to the ATP-dependent AMP-binding enzyme family.

The catalysed reaction is holo-[peptidyl-carrier protein] + L-serine + ATP = L-seryl-[peptidyl-carrier protein] + AMP + diphosphate. Its pathway is antibiotic biosynthesis. Its function is as follows. Involved in the biosynthesis of the linear aminopolyol antibiotic zwittermicin A (ZmA). Specifically adenylates L-serine and loads it onto the holo form of ZmaH via a thioester linkage to the phosphopanthetheine moiety. In Bacillus cereus, this protein is Zwittermicin A synthase ZmaJ.